Consider the following 398-residue polypeptide: S-adenosylmethionine synthase (398 aa).

Histidine 15 is an ATP binding site. Residue aspartate 17 participates in Mg(2+) binding. Glutamate 43 contributes to the K(+) binding site. L-methionine-binding residues include glutamate 56 and glutamine 99. Residues 99–109 (QSPDIAQGVDT) are flexible loop. Residues 175–177 (DGK), 243–244 (RF), aspartate 252, 258–259 (RK), alanine 275, and lysine 279 each bind ATP. Aspartate 252 is an L-methionine binding site. Lysine 283 is an L-methionine binding site.

It belongs to the AdoMet synthase family. As to quaternary structure, homotetramer; dimer of dimers. It depends on Mg(2+) as a cofactor. K(+) serves as cofactor.

Its subcellular location is the cytoplasm. It catalyses the reaction L-methionine + ATP + H2O = S-adenosyl-L-methionine + phosphate + diphosphate. It functions in the pathway amino-acid biosynthesis; S-adenosyl-L-methionine biosynthesis; S-adenosyl-L-methionine from L-methionine: step 1/1. Functionally, catalyzes the formation of S-adenosylmethionine (AdoMet) from methionine and ATP. The overall synthetic reaction is composed of two sequential steps, AdoMet formation and the subsequent tripolyphosphate hydrolysis which occurs prior to release of AdoMet from the enzyme. This is S-adenosylmethionine synthase from Parafrankia sp. (strain EAN1pec).